Here is a 369-residue protein sequence, read N- to C-terminus: Methylthioribose-1-phosphate isomerase (369 aa).

Met1 is subject to N-acetylmethionine. Arg158 is modified (omega-N-methylarginine). Asp248 functions as the Proton donor in the catalytic mechanism. A Phosphoserine modification is found at Ser366.

Belongs to the eIF-2B alpha/beta/delta subunits family. MtnA subfamily.

The protein localises to the cytoplasm. The protein resides in the nucleus. The enzyme catalyses 5-(methylsulfanyl)-alpha-D-ribose 1-phosphate = 5-(methylsulfanyl)-D-ribulose 1-phosphate. It functions in the pathway amino-acid biosynthesis; L-methionine biosynthesis via salvage pathway; L-methionine from S-methyl-5-thio-alpha-D-ribose 1-phosphate: step 1/6. Functionally, catalyzes the interconversion of methylthioribose-1-phosphate (MTR-1-P) into methylthioribulose-1-phosphate (MTRu-1-P). This is Methylthioribose-1-phosphate isomerase (Mri1) from Mus musculus (Mouse).